A 257-amino-acid chain; its full sequence is MDRIIEKLDHGWWIVSHEQKLWLPRGELPYGEATNFDLVGQRALLIGEWEGEPVWLVLQHRRHDMGSVRQVIDQDVGLFQLAGRGVQLAEFYRSHKFCGYCGHPMYPSKTEWAMLCSHCRERYYPQIAPCIIVAIRRADSILLAQHTRHRNGVHTVLAGFVEVGETLEQAVAREVMEESGIKVKNLRYVTSQPWPFPQSLMTAFMAEYDSGEIVIDPKELLEAGWYRYDDLPLLPPPGTVARRLIEDTVAMCRAEYE.

Arg69 provides a ligand contact to substrate. Zn(2+)-binding residues include Cys98 and Cys101. Glu111 lines the substrate pocket. Positions 116 and 119 each coordinate Zn(2+). Residue Tyr124 coordinates substrate. The 124-residue stretch at Pro125 to Thr248 folds into the Nudix hydrolase domain. A divalent metal cation is bound by residues Ala158, Glu174, and Glu178. The Nudix box motif lies at Gly159–Gly180. Position 192–199 (Gln192–Ser199) interacts with substrate. Glu219 contacts a divalent metal cation. Residue Ala241 participates in substrate binding.

Belongs to the Nudix hydrolase family. NudC subfamily. In terms of assembly, homodimer. The cofactor is Mg(2+). Requires Mn(2+) as cofactor. Zn(2+) is required as a cofactor.

The enzyme catalyses a 5'-end NAD(+)-phospho-ribonucleoside in mRNA + H2O = a 5'-end phospho-adenosine-phospho-ribonucleoside in mRNA + beta-nicotinamide D-ribonucleotide + 2 H(+). It carries out the reaction NAD(+) + H2O = beta-nicotinamide D-ribonucleotide + AMP + 2 H(+). The catalysed reaction is NADH + H2O = reduced beta-nicotinamide D-ribonucleotide + AMP + 2 H(+). MRNA decapping enzyme that specifically removes the nicotinamide adenine dinucleotide (NAD) cap from a subset of mRNAs by hydrolyzing the diphosphate linkage to produce nicotinamide mononucleotide (NMN) and 5' monophosphate mRNA. The NAD-cap is present at the 5'-end of some mRNAs and stabilizes RNA against 5'-processing. Has preference for mRNAs with a 5'-end purine. Catalyzes the hydrolysis of a broad range of dinucleotide pyrophosphates. The chain is NAD-capped RNA hydrolase NudC from Citrobacter koseri (strain ATCC BAA-895 / CDC 4225-83 / SGSC4696).